The primary structure comprises 259 residues: Proteasome subunit alpha 1 (259 aa).

Positions 231–259 (LVPAEPAAASESAPEPKPDTETKPADTQD) are disordered. Over residues 233–243 (PAEPAAASESA) the composition is skewed to low complexity. A compositionally biased stretch (basic and acidic residues) spans 244–259 (PEPKPDTETKPADTQD).

The protein belongs to the peptidase T1A family. As to quaternary structure, the 20S proteasome core is composed of 14 alpha and 14 beta subunits that assemble into four stacked heptameric rings, resulting in a barrel-shaped structure. The two inner rings, each composed of seven catalytic beta subunits, are sandwiched by two outer rings, each composed of seven alpha subunits. All four combinations of alpha- and beta-subunits (beta2-alpha1, beta2-alpha2, beta1-alpha2 and beta1-alpha1) yield fully assembled and proteolytically active proteasomes. The catalytic chamber with the active sites is on the inside of the barrel. Has probably a gated structure, the ends of the cylinder being occluded by the N-termini of the alpha-subunits. Is likely capped by the proteasome-associated ATPase, ARC. In terms of processing, the N-terminus is blocked.

It localises to the cytoplasm. It functions in the pathway protein degradation; proteasomal Pup-dependent pathway. With respect to regulation, the formation of the proteasomal ATPase ARC-20S proteasome complex, likely via the docking of the C-termini of ARC into the intersubunit pockets in the alpha-rings, may trigger opening of the gate for substrate entry. Interconversion between the open-gate and close-gate conformations leads to a dynamic regulation of the 20S proteasome proteolysis activity. Functionally, component of the proteasome core, a large protease complex with broad specificity involved in protein degradation. The R.erythropolis proteasomes are able to cleave oligopeptides after Tyr, Phe and Leu, very poorly after Arg but not after Glu. Thus, displays chymotrypsin-like activity, low trypsin-like activity but no caspase-like activity. The protein is Proteasome subunit alpha 1 of Rhodococcus erythropolis (Arthrobacter picolinophilus).